The following is a 102-amino-acid chain: Phosphoribosyl-ATP pyrophosphatase (102 aa).

It belongs to the PRA-PH family.

Its subcellular location is the cytoplasm. The catalysed reaction is 1-(5-phospho-beta-D-ribosyl)-ATP + H2O = 1-(5-phospho-beta-D-ribosyl)-5'-AMP + diphosphate + H(+). The protein operates within amino-acid biosynthesis; L-histidine biosynthesis; L-histidine from 5-phospho-alpha-D-ribose 1-diphosphate: step 2/9. The protein is Phosphoribosyl-ATP pyrophosphatase of Jannaschia sp. (strain CCS1).